Reading from the N-terminus, the 311-residue chain is Methionyl-tRNA formyltransferase (311 aa).

Residue 110 to 113 (SLLP) participates in (6S)-5,6,7,8-tetrahydrofolate binding.

The protein belongs to the Fmt family.

The catalysed reaction is L-methionyl-tRNA(fMet) + (6R)-10-formyltetrahydrofolate = N-formyl-L-methionyl-tRNA(fMet) + (6S)-5,6,7,8-tetrahydrofolate + H(+). Its function is as follows. Attaches a formyl group to the free amino group of methionyl-tRNA(fMet). The formyl group appears to play a dual role in the initiator identity of N-formylmethionyl-tRNA by promoting its recognition by IF2 and preventing the misappropriation of this tRNA by the elongation apparatus. The protein is Methionyl-tRNA formyltransferase of Streptococcus pyogenes serotype M49 (strain NZ131).